The chain runs to 157 residues: 2-C-methyl-D-erythritol 2,4-cyclodiphosphate synthase (157 aa).

A divalent metal cation-binding residues include Asp8 and His10. 4-CDP-2-C-methyl-D-erythritol 2-phosphate contacts are provided by residues 8-10 (DVH) and 34-35 (HS). An a divalent metal cation-binding site is contributed by His42. Residues 56 to 58 (DIG), 61 to 65 (FPDTD), 100 to 106 (AQAPKMA), 132 to 135 (TTTE), Phe139, and Arg142 contribute to the 4-CDP-2-C-methyl-D-erythritol 2-phosphate site.

It belongs to the IspF family. As to quaternary structure, homotrimer. A divalent metal cation serves as cofactor.

It carries out the reaction 4-CDP-2-C-methyl-D-erythritol 2-phosphate = 2-C-methyl-D-erythritol 2,4-cyclic diphosphate + CMP. It participates in isoprenoid biosynthesis; isopentenyl diphosphate biosynthesis via DXP pathway; isopentenyl diphosphate from 1-deoxy-D-xylulose 5-phosphate: step 4/6. In terms of biological role, involved in the biosynthesis of isopentenyl diphosphate (IPP) and dimethylallyl diphosphate (DMAPP), two major building blocks of isoprenoid compounds. Catalyzes the conversion of 4-diphosphocytidyl-2-C-methyl-D-erythritol 2-phosphate (CDP-ME2P) to 2-C-methyl-D-erythritol 2,4-cyclodiphosphate (ME-CPP) with a corresponding release of cytidine 5-monophosphate (CMP). The chain is 2-C-methyl-D-erythritol 2,4-cyclodiphosphate synthase from Pseudomonas paraeruginosa (strain DSM 24068 / PA7) (Pseudomonas aeruginosa (strain PA7)).